The following is a 122-amino-acid chain: Phosphoribosyl-ATP pyrophosphatase (122 aa).

This sequence belongs to the PRA-PH family.

It localises to the cytoplasm. It catalyses the reaction 1-(5-phospho-beta-D-ribosyl)-ATP + H2O = 1-(5-phospho-beta-D-ribosyl)-5'-AMP + diphosphate + H(+). It functions in the pathway amino-acid biosynthesis; L-histidine biosynthesis; L-histidine from 5-phospho-alpha-D-ribose 1-diphosphate: step 2/9. This Burkholderia mallei (strain NCTC 10247) protein is Phosphoribosyl-ATP pyrophosphatase.